The following is a 326-amino-acid chain: Homocysteine S-methyltransferase 1 (326 aa).

The Hcy-binding domain occupies 9-323 (LLEDLIKKCG…STINAISRDL (315 aa)). Residues Cys-241, Cys-308, and Cys-309 each coordinate Zn(2+).

Monomer. Zn(2+) serves as cofactor. As to expression, expressed predominantly in roots. Expressed in rosette leaves, cauline leaves and developing seeds.

It catalyses the reaction S-methyl-L-methionine + L-homocysteine = 2 L-methionine + H(+). Strongly inhibited by methionine. In terms of biological role, catalyzes methyl transfer from S-methylmethionine (SMM) to adenosyl-L-homocysteine (AdoMet). SMM degradation (by HMT-1, HMT-2 and HMT-3) and biosynthesis (by MMT1) constitute the SMM cycle in plants, which is probably required to achieve short term control of AdoMet level. The polypeptide is Homocysteine S-methyltransferase 1 (HMT-1) (Arabidopsis thaliana (Mouse-ear cress)).